We begin with the raw amino-acid sequence, 410 residues long: Probable ATP-dependent RNA helicase MG308 (410 aa).

The region spanning 26–179 (VFKLWPFQNI…KKQVINTKVI (154 aa)) is the Helicase ATP-binding domain. 39–46 (AETGSGKT) serves as a coordination point for ATP. The DEID box signature appears at 126-129 (DEID). The region spanning 190 to 357 (LVKHFVVHLN…DLKFLTENNQ (168 aa)) is the Helicase C-terminal domain.

The protein belongs to the DEAD box helicase family.

The enzyme catalyses ATP + H2O = ADP + phosphate + H(+). The protein is Probable ATP-dependent RNA helicase MG308 of Mycoplasma genitalium (strain ATCC 33530 / DSM 19775 / NCTC 10195 / G37) (Mycoplasmoides genitalium).